A 552-amino-acid chain; its full sequence is MEKVKQTIRAPRGTELQTKGWVQEAALRMLMNNLDPEVAEKPEELVVYGGIGRAARNWESYQAIVDSLKTLESDETLLVQSGKPVAIFKSHEDAPRVLLANSNLVPKWANWDHFRELEKKGLMMYGQMTAGSWIYIGTQGILQGTYETFGEAARQHFGGSLKGTLTLTAGLGGMGGAQPLAVTMNGGVVIAIDVDKRSIDRRIEKRYCDMYTESLEEALAVANEYKEKKEPISIGLLGNAAEILPELVKRNITPDLVTDQTSAHDPLNGYIPVGYTLEEAAKLREEDPERYVQLSKESMTKHVEAMLAMQEKGAITFDYGNNIRQVAFDEGLKNAFDFPGFVPAFIRPLFCEGKGPFRWVALSGDPEDIYKTDEVILREFADNEHLCNWIRMARQQVEFQGLPSRICWLGYGERAKFGRIINEMVANGELSAPIVIGRDHLDCGSVASPNRETEAMKDGSDSVADWPILNALINSVNGASWVSVHHGGGVGMGYSLHAGMVIVADGTEAAAKRIERVLTSDPGMGVVRHVDAGYDLAVETAKEKGVNIPMMK.

Residues 49 to 50 (GG), Q127, 173 to 175 (GMG), D193, 239 to 240 (NA), 260 to 264 (QTSAH), 270 to 271 (YI), and Y319 contribute to the NAD(+) site. C407 is an active-site residue. Position 489 (G489) interacts with NAD(+).

It belongs to the urocanase family. NAD(+) is required as a cofactor.

It localises to the cytoplasm. It carries out the reaction 4-imidazolone-5-propanoate = trans-urocanate + H2O. Its pathway is amino-acid degradation; L-histidine degradation into L-glutamate; N-formimidoyl-L-glutamate from L-histidine: step 2/3. Catalyzes the conversion of urocanate to 4-imidazolone-5-propionate. The sequence is that of Urocanate hydratase from Bacillus anthracis (strain CDC 684 / NRRL 3495).